Consider the following 533-residue polypeptide: T-complex protein 1 subunit delta (533 aa).

The segment at 1–24 (MVVKPAARGMKPQGQAYKDKSKPA) is disordered.

This sequence belongs to the TCP-1 chaperonin family. In terms of assembly, heterooligomeric complex of about 850 to 900 kDa that forms two stacked rings, 12 to 16 nm in diameter.

The protein localises to the cytoplasm. Molecular chaperone; assists the folding of proteins upon ATP hydrolysis. Known to play a role, in vitro, in the folding of actin and tubulin. The protein is T-complex protein 1 subunit delta of Ochlerotatus triseriatus (Eastern treehole mosquito).